Consider the following 1381-residue polypeptide: MKAPAVLAPGILVLLFTLVQRSNGECKEALAKSEMNVNMKYQLPNFTAETPIQNVILHEHHIFLGATNYIYVLNEEDLQKVAEYKTGPVLEHPDCFPCQDCSSKANLSGGVWKDNINMALVVDTYYDDQLISCGSGNRGTCQRHVFPHNHTADIQSEVHCIFSPQIEEPSQCPDCVVSALGAKVLSSVKDRFINFFVGNTINSSYFPHHPLHSISVRRLKETKDGFVFLTDQSYIDVLPEFRDSYPIKYVHAFESNNFIYFLSVQRETLNAQTFHTRIIRFCSINSGLHSYMEMPLECILTEKRKKRSTKKEVFNILQAAYVSKPGAQLARQIGASLNDDILFGVFAQSKPDSAEPMDRSAMCAFPIKYVNDFFNKIVNKNNVRCLQHFYGPNHEHCFNRTLLRNSSGCEARRDEYRAEFTTALQRVDLFMGQFSEVLLTSISTFVKGDLTIANLGTSEGRFMQVVVSRSGPSTPHVNFLLDSHPVSPEVIVEHPLNQNGYTLVVTGKKITKIPLNGLGCRHFQSCSQCLSAPPFVQCGWCQDKCVRSEDCPSGTWTQQICLPAIYKVFPTSAPLEGGTRLTICGWDFGFRRNNKFDLKKTRVLLGNESCTLTLSESTMNTLKCTVGPAMNKHFNMSIIISNGHGTTQYSTFSYVDPIITSISPKYGPMAGGTLLTLTGNYLNSGNSRHISIGGKTCTLKSVSNSILECYTPAQTISTEFAVKLKIDLANRETSIFSYREDPIVYEIHPTKSFISGGSTITGVGKNLHSVSVPRMVINVHEAGRNFTVACQHRSNSEIICCTTPSLQQLNLQLPLKTKAFFMLDGILSKYFDLIYVHNPVFKPFEKPVMISMGNENVLEIKGNDIDPEAVKGEVLKVGNKSCENIHLHSEAVLCTVPNDLLKLNSELNIEWKQAISSTVLGKVIVQPDQNFTGLIAGVVSISIALLLLLGLFLWLKKRKQIKDLGSELVRYDARVHTPHLDRLVSARSVSPTTEMVSNESVDYRATFPEDQFPNSSQNGSCRQVQYPLTDMSPILTSGDSDISSPLLQNTVHIDLSALNPELVQAVQHVVIGPSSLIVHFNEVIGRGHFGCVYHGTLLDNDGKKIHCAVKSLNRITDIGEVSQFLTEGIIMKDFSHPNVLSLLGICLRSEGSPLVVLPYMKHGDLRNFIRNETHNPTVKDLIGFGLQVAKGMKYLASKKFVHRDLAARNCMLDEKFTVKVADFGLARDMYDKEYYSVHNKTGAKLPVKWMALESLQTQKFTTKSDVWSFGVLLWELMTRGAPPYPDVNTFDITVYLLQGRRLLQPEYCPDPLYEVMLKCWHPKAEMRPSFSELVSRISAIFSTFIGEHYVHVNATYVNVKCVAPYPSLLSSEDNADDEVDT.

A signal peptide spans 1-24 (MKAPAVLAPGILVLLFTLVQRSNG). Residues 25 to 932 (ECKEALAKSE…VIVQPDQNFT (908 aa)) lie on the Extracellular side of the membrane. Residues 27–515 (KEALAKSEMN…TGKKITKIPL (489 aa)) enclose the Sema domain. Asparagine 45 carries an N-linked (GlcNAc...) asparagine glycan. 4 disulfides stabilise this stretch: cysteine 95–cysteine 101, cysteine 98–cysteine 160, cysteine 133–cysteine 141, and cysteine 172–cysteine 175. N-linked (GlcNAc...) asparagine glycosylation is present at asparagine 106. Asparagine 149 is a glycosylation site (N-linked (GlcNAc...) asparagine). N-linked (GlcNAc...) asparagine glycosylation is present at asparagine 202. 2 disulfide bridges follow: cysteine 298–cysteine 363 and cysteine 385–cysteine 397. Residues asparagine 399 and asparagine 405 are each glycosylated (N-linked (GlcNAc...) asparagine). 4 disulfide bridges follow: cysteine 520–cysteine 538, cysteine 526–cysteine 561, cysteine 529–cysteine 545, and cysteine 541–cysteine 551. 3 IPT/TIG domains span residues 563 to 655 (PAIY…FSYV), 657 to 739 (PIIT…FSYR), and 742 to 836 (PIVY…LIYV). O-linked (Man) threonine glycosylation occurs at threonine 582. 2 N-linked (GlcNAc...) asparagine glycosylation sites follow: asparagine 607 and asparagine 635. 2 O-linked (Man) threonine glycosylation sites follow: threonine 676 and threonine 761. 3 N-linked (GlcNAc...) asparagine glycosylation sites follow: asparagine 785, asparagine 879, and asparagine 930. The helical transmembrane segment at 933 to 955 (GLIAGVVSISIALLLLLGLFLWL) threads the bilayer. The Cytoplasmic segment spans residues 956 to 1381 (KKRKQIKDLG…EDNADDEVDT (426 aa)). Serine 966 bears the Phosphoserine mark. Threonine 977 bears the Phosphothreonine mark. Serine 990, serine 997, and serine 1000 each carry phosphoserine. Position 1003 is a phosphotyrosine (tyrosine 1003). The region spanning 1078–1345 (VHFNEVIGRG…RISAIFSTFI (268 aa)) is the Protein kinase domain. Residues 1084–1092 (IGRGHFGCV) and lysine 1110 each bind ATP. Aspartate 1204 (proton acceptor) is an active-site residue. The segment at 1212 to 1381 (LDEKFTVKVA…EDNADDEVDT (170 aa)) is interaction with RANBP9. Phosphotyrosine is present on tyrosine 1230. Phosphotyrosine; by autocatalysis occurs at positions 1234 and 1235. A Phosphothreonine modification is found at threonine 1289. The tract at residues 1320–1359 (WHPKAEMRPSFSELVSRISAIFSTFIGEHYVHVNATYVNV) is interaction with MUC20. 2 positions are modified to phosphotyrosine; by autocatalysis: tyrosine 1349 and tyrosine 1356. Tyrosine 1365 bears the Phosphotyrosine mark.

It belongs to the protein kinase superfamily. Tyr protein kinase family. Heterodimer made of an alpha chain (50 kDa) and a beta chain (145 kDa) which are disulfide linked. Binds PLXNB1. Interacts when phosphorylated with downstream effectors including STAT3, PIK3R1, SRC, PCLG1, GRB2 and GAB1. Interacts with SPSB1, SPSB2 and SPSB4. Interacts with INPP5D/SHIP1. When phosphorylated at Tyr-1356, interacts with INPPL1/SHIP2. Interacts with RANBP9 and RANBP10, as well as SPSB1, SPSB2, SPSB3 and SPSB4. SPSB1 binding occurs in the presence and in the absence of HGF, however HGF treatment has a positive effect on this interaction. Interacts with MUC20; prevents interaction with GRB2 and suppresses hepatocyte growth factor-induced cell proliferation. Interacts with GRB10. Interacts with PTPN1 and PTPN2. Interacts with HSP90AA1 and HSP90AB1; the interaction suppresses MET kinase activity. Interacts with tensin TNS3. Interacts (when phosphorylated) with tensin TNS4 (via SH2 domain); the interaction increases MET protein stability by inhibiting MET endocytosis and subsequent lysosomal degradation. In terms of processing, autophosphorylated in response to ligand binding on Tyr-1234 and Tyr-1235 in the kinase domain leading to further phosphorylation of Tyr-1349 and Tyr-1356 in the C-terminal multifunctional docking site. Dephosphorylated by PTPRJ at Tyr-1349 and Tyr-1365. Dephosphorylated by PTPN1 and PTPN2. Post-translationally, ubiquitinated. Ubiquitination by CBL regulates the receptor stability and activity through proteasomal degradation. O-mannosylation of IPT/TIG domains by TMEM260 is required for protein maturation. O-mannosylated residues are composed of single mannose glycans that are not elongated or modified.

The protein localises to the membrane. It catalyses the reaction L-tyrosyl-[protein] + ATP = O-phospho-L-tyrosyl-[protein] + ADP + H(+). In its inactive state, the C-terminal tail interacts with the catalytic domain and inhibits the kinase activity. Upon ligand binding, the C-terminal tail is displaced and becomes phosphorylated, thus increasing the kinase activity. Its function is as follows. Receptor tyrosine kinase that transduces signals from the extracellular matrix into the cytoplasm by binding to hepatocyte growth factor/HGF ligand. Regulates many physiological processes including proliferation, scattering, morphogenesis and survival. Ligand binding at the cell surface induces autophosphorylation of MET on its intracellular domain that provides docking sites for downstream signaling molecules. Following activation by ligand, interacts with the PI3-kinase subunit PIK3R1, PLCG1, SRC, GRB2, STAT3 or the adapter GAB1. Recruitment of these downstream effectors by MET leads to the activation of several signaling cascades including the RAS-ERK, PI3 kinase-AKT, or PLCgamma-PKC. The RAS-ERK activation is associated with the morphogenetic effects while PI3K/AKT coordinates prosurvival effects. During embryonic development, MET signaling plays a role in gastrulation, development and migration of muscles and neuronal precursors, angiogenesis and kidney formation. In adults, participates in wound healing as well as organ regeneration and tissue remodeling. Also promotes differentiation and proliferation of hematopoietic cells. This chain is Hepatocyte growth factor receptor (MET), found in Colobus guereza (Mantled guereza).